The chain runs to 310 residues: ADP-L-glycero-D-manno-heptose-6-epimerase (310 aa).

NADP(+)-binding positions include 10–11, 31–32, Lys38, Lys53, 75–79, and Asn92; these read FI, DN, and EGACS. The Proton acceptor role is filled by Tyr140. Lys144 contacts NADP(+). Position 169 (Asn169) interacts with substrate. The NADP(+) site is built by Val170 and Lys178. Lys178 (proton acceptor) is an active-site residue. Residues Ser180, His187, 201–204, Arg209, and Tyr272 each bind substrate; that span reads FEGS.

This sequence belongs to the NAD(P)-dependent epimerase/dehydratase family. HldD subfamily. In terms of assembly, homopentamer. NADP(+) is required as a cofactor.

It catalyses the reaction ADP-D-glycero-beta-D-manno-heptose = ADP-L-glycero-beta-D-manno-heptose. Its pathway is nucleotide-sugar biosynthesis; ADP-L-glycero-beta-D-manno-heptose biosynthesis; ADP-L-glycero-beta-D-manno-heptose from D-glycero-beta-D-manno-heptose 7-phosphate: step 4/4. In terms of biological role, catalyzes the interconversion between ADP-D-glycero-beta-D-manno-heptose and ADP-L-glycero-beta-D-manno-heptose via an epimerization at carbon 6 of the heptose. This is ADP-L-glycero-D-manno-heptose-6-epimerase from Salmonella paratyphi C (strain RKS4594).